A 372-amino-acid chain; its full sequence is Cobalt-precorrin-5B C(1)-methyltransferase (372 aa).

Belongs to the CbiD family.

It carries out the reaction Co-precorrin-5B + S-adenosyl-L-methionine = Co-precorrin-6A + S-adenosyl-L-homocysteine. The protein operates within cofactor biosynthesis; adenosylcobalamin biosynthesis; cob(II)yrinate a,c-diamide from sirohydrochlorin (anaerobic route): step 6/10. In terms of biological role, catalyzes the methylation of C-1 in cobalt-precorrin-5B to form cobalt-precorrin-6A. The polypeptide is Cobalt-precorrin-5B C(1)-methyltransferase (Prochlorococcus marinus (strain MIT 9515)).